A 118-amino-acid polypeptide reads, in one-letter code: Large ribosomal subunit protein uL18 (118 aa).

This sequence belongs to the universal ribosomal protein uL18 family. In terms of assembly, part of the 50S ribosomal subunit; part of the 5S rRNA/L5/L18/L25 subcomplex. Contacts the 5S and 23S rRNAs.

Functionally, this is one of the proteins that bind and probably mediate the attachment of the 5S RNA into the large ribosomal subunit, where it forms part of the central protuberance. The chain is Large ribosomal subunit protein uL18 from Helicobacter hepaticus (strain ATCC 51449 / 3B1).